A 202-amino-acid polypeptide reads, in one-letter code: Putative 3-methyladenine DNA glycosylase (202 aa).

It belongs to the DNA glycosylase MPG family.

This chain is Putative 3-methyladenine DNA glycosylase, found in Alkaliphilus oremlandii (strain OhILAs) (Clostridium oremlandii (strain OhILAs)).